A 283-amino-acid polypeptide reads, in one-letter code: Hydroxyacylglutathione hydrolase-like protein (283 aa).

The Zn(2+) site is built by histidine 54, histidine 56, aspartate 58, histidine 59, histidine 110, aspartate 134, and histidine 173.

It belongs to the metallo-beta-lactamase superfamily. Glyoxalase II family. It depends on Zn(2+) as a cofactor.

Its function is as follows. Hydrolase acting on ester bonds. The sequence is that of Hydroxyacylglutathione hydrolase-like protein (Haghl) from Mus musculus (Mouse).